The primary structure comprises 111 residues: MGKSMEEGIFVKVFPSKAIFVIYKEVEIIVKPDYAGDTIKVKYVFNSDELQKKLVEYFNKFNVPYKEISKNEVEVYYDPMYQLDCFDHMFEKLTMGDTDYIDSILGRLLPI.

The first 18 residues, 1–18 (MGKSMEEGIFVKVFPSKA), serve as a signal peptide directing secretion.

This is an uncharacterized protein from Acidianus convivator (ATV).